The primary structure comprises 117 residues: Large ribosomal subunit protein bL20 (117 aa).

It belongs to the bacterial ribosomal protein bL20 family.

Functionally, binds directly to 23S ribosomal RNA and is necessary for the in vitro assembly process of the 50S ribosomal subunit. It is not involved in the protein synthesizing functions of that subunit. This chain is Large ribosomal subunit protein bL20, found in Thermomicrobium roseum (strain ATCC 27502 / DSM 5159 / P-2).